The primary structure comprises 717 residues: Delta-1-pyrroline-5-carboxylate synthase (717 aa).

Residues 1-296 are glutamate 5-kinase; that stretch reads METVDSTRAF…WASIGETDAR (296 aa). Substrate contacts are provided by Ser60, Asp157, and Asn176. ATP is bound by residues 196 to 197 and 236 to 242; these read SD and RGGMTAK. The tract at residues 297–717 is gamma-glutamyl phosphate reductase; it reads EMAVAARACS…YSHKDLTQQG (421 aa).

The protein in the N-terminal section; belongs to the glutamate 5-kinase family. It in the C-terminal section; belongs to the gamma-glutamyl phosphate reductase family. Expressed at high levels in leaves and is inducible in roots subjected to salt stress.

It catalyses the reaction L-glutamate + ATP = L-glutamyl 5-phosphate + ADP. It carries out the reaction L-glutamate 5-semialdehyde + phosphate + NADP(+) = L-glutamyl 5-phosphate + NADPH + H(+). Its pathway is amino-acid biosynthesis; L-proline biosynthesis; L-glutamate 5-semialdehyde from L-glutamate: step 1/2. It participates in amino-acid biosynthesis; L-proline biosynthesis; L-glutamate 5-semialdehyde from L-glutamate: step 2/2. Feedback regulated by proline. Its function is as follows. P5CS plays a key role in proline biosynthesis, leading to osmoregulation in plants. In Solanum lycopersicum (Tomato), this protein is Delta-1-pyrroline-5-carboxylate synthase (PRO2).